The following is a 129-amino-acid chain: Small ribosomal subunit protein uS11 (129 aa).

Belongs to the universal ribosomal protein uS11 family. As to quaternary structure, part of the 30S ribosomal subunit. Interacts with proteins S7 and S18. Binds to IF-3.

Functionally, located on the platform of the 30S subunit, it bridges several disparate RNA helices of the 16S rRNA. Forms part of the Shine-Dalgarno cleft in the 70S ribosome. The polypeptide is Small ribosomal subunit protein uS11 (Colwellia psychrerythraea (strain 34H / ATCC BAA-681) (Vibrio psychroerythus)).